We begin with the raw amino-acid sequence, 382 residues long: 3-hydroxyisobutyryl-CoA hydrolase, mitochondrial (382 aa).

Substrate contacts are provided by Glu-117, Gly-142, Glu-165, and Asp-173.

Belongs to the enoyl-CoA hydratase/isomerase family.

The protein resides in the mitochondrion. The catalysed reaction is 3-hydroxy-2-methylpropanoyl-CoA + H2O = 3-hydroxy-2-methylpropanoate + CoA + H(+). It functions in the pathway amino-acid degradation; L-valine degradation. Functionally, hydrolyzes 3-hydroxyisobutyryl-CoA (HIBYL-CoA), a saline catabolite. Has high activity toward isobutyryl-CoA. Could be an isobutyryl-CoA dehydrogenase that functions in valine catabolism. Also hydrolyzes 3-hydroxypropanoyl-CoA. The polypeptide is 3-hydroxyisobutyryl-CoA hydrolase, mitochondrial (hibch) (Danio rerio (Zebrafish)).